A 491-amino-acid chain; its full sequence is Delayed-rectifier potassium channel regulatory subunit KCNS3 (491 aa).

The Cytoplasmic portion of the chain corresponds to 1–182; the sequence is MVFGEFFHRP…IRMENPAYCL (182 aa). Residues 183–204 form a helical membrane-spanning segment; sequence SAKLIAISSLSVVLASIVAMCV. Topologically, residues 205–220 are extracellular; that stretch reads HSMSEFQNEDGEVDDP. The chain crosses the membrane as a helical span at residues 221–243; the sequence is VLEGVEIACIAWFTGELAVRLVA. Over 244–254 the chain is Cytoplasmic; it reads APCQKKFWKNP. A helical membrane pass occupies residues 255–275; sequence LNIIDFVSIIPFYATLAVDTK. Over 276–285 the chain is Extracellular; it reads EEESEDIENM. Residues 286-306 form a helical; Voltage-sensor membrane-spanning segment; that stretch reads GKVVQILRLMRIFRILKLARH. The Cytoplasmic segment spans residues 307–321; the sequence is SVGLRSLGATLRHSY. The helical transmembrane segment at 322–343 threads the bilayer; it reads HEVGLLLLFLSVGISIFSVLIY. Residues 344–357 lie on the Extracellular side of the membrane; it reads SVEKDDHTSSLTSI. Residues 358–369 constitute an intramembrane region (helical); that stretch reads PICWWWATISMT. The Selectivity filter motif lies at 370-375; the sequence is TVGYGD. Residues 370 to 377 lie within the membrane without spanning it; sequence TVGYGDTH. Residues 378 to 384 lie on the Extracellular side of the membrane; sequence PVTLAGK. A helical membrane pass occupies residues 385 to 413; that stretch reads LIASTCIICGILVVALPITIIFNKFSKYY. The Cytoplasmic portion of the chain corresponds to 414–491; sequence QKQKDIDVDQ…TASLENCTAK (78 aa).

Belongs to the potassium channel family. S (TC 1.A.1.2) subfamily. Kv9.3/KCNS3 sub-subfamily. As to quaternary structure, heterotetramer with KCNB1. Does not form homomultimers.

It is found in the cell membrane. Its function is as follows. Potassium channel regulatory subunit that modulates the delayed rectifier potassium channel activity of KCNB1 by namely slowing down the deactivation and inactivation time constants. While it does not form functional channel on its own, it can form functional heterotetrameric channels with KCNB1. This Oryctolagus cuniculus (Rabbit) protein is Delayed-rectifier potassium channel regulatory subunit KCNS3.